We begin with the raw amino-acid sequence, 257 residues long: NAD kinase (257 aa).

Residue Asp-46 is the Proton acceptor of the active site. Residues 46 to 47 (DG), His-51, 116 to 117 (NE), Asp-146, Ala-154, 157 to 162 (TAYNLS), and Gln-218 contribute to the NAD(+) site.

It belongs to the NAD kinase family. The cofactor is a divalent metal cation.

It is found in the cytoplasm. The catalysed reaction is NAD(+) + ATP = ADP + NADP(+) + H(+). Involved in the regulation of the intracellular balance of NAD and NADP, and is a key enzyme in the biosynthesis of NADP. Catalyzes specifically the phosphorylation on 2'-hydroxyl of the adenosine moiety of NAD to yield NADP. The sequence is that of NAD kinase from Rhizobium meliloti (strain 1021) (Ensifer meliloti).